The sequence spans 542 residues: Chaperonin GroEL (542 aa).

ATP is bound by residues 29 to 32 (TLGP), 86 to 90 (DGTTT), Gly413, 477 to 479 (NAA), and Asp493.

The protein belongs to the chaperonin (HSP60) family. As to quaternary structure, forms a cylinder of 14 subunits composed of two heptameric rings stacked back-to-back. Interacts with the co-chaperonin GroES.

The protein localises to the cytoplasm. The catalysed reaction is ATP + H2O + a folded polypeptide = ADP + phosphate + an unfolded polypeptide.. Functionally, together with its co-chaperonin GroES, plays an essential role in assisting protein folding. The GroEL-GroES system forms a nano-cage that allows encapsulation of the non-native substrate proteins and provides a physical environment optimized to promote and accelerate protein folding. This chain is Chaperonin GroEL, found in Beutenbergia cavernae (strain ATCC BAA-8 / DSM 12333 / CCUG 43141 / JCM 11478 / NBRC 16432 / NCIMB 13614 / HKI 0122).